The sequence spans 140 residues: Cystatin-like 1 (140 aa).

The first 23 residues, 1 to 23 (MEMKARGLRIPLLLLLVTVVVMA), serve as a signal peptide directing secretion. The region spanning 32–126 (GGFKEKAMSK…CKSLIYSVPW (95 aa)) is the Cystatin domain. Asparagine 45 carries an N-linked (GlcNAc...) asparagine glycan. Cystine bridges form between cysteine 94-cysteine 104 and cysteine 117-cysteine 137.

The protein belongs to the cystatin family. As to expression, highly expressed in testis where it localizes to spermatogonium, spermatocyes and round spermatids. Not detected in spermatozoa. Also detected in epididymis, cerebrum and pituitary.

It is found in the secreted. The polypeptide is Cystatin-like 1 (Mus musculus (Mouse)).